The primary structure comprises 248 residues: Mitochondrial import inner membrane translocase subunit Tim21 (248 aa).

A mitochondrion-targeting transit peptide spans 1–18 (MICTFLRAVQYTEKLHRS). Residues 67 to 98 (TQGPSPRKAKEDGSKQVSVHRSQRGGTAVPTS) are disordered. Residues 108 to 128 (FTYLIVVLFGISITGGLFYTI) form a helical membrane-spanning segment.

Belongs to the TIM21 family. In terms of assembly, component of the TIM23 complex. Component of the MITRAC (mitochondrial translation regulation assembly intermediate of cytochrome c oxidase complex) complex, the core components of this complex being COA3/MITRAC12 and COX14. Interacts with COA3 and MT-CO1/COX1.

The protein localises to the mitochondrion membrane. In terms of biological role, participates in the translocation of transit peptide-containing proteins across the mitochondrial inner membrane. Also required for assembly of mitochondrial respiratory chain complex I and complex IV as component of the MITRAC (mitochondrial translation regulation assembly intermediate of cytochrome c oxidase complex) complex. Probably shuttles between the presequence translocase and respiratory-chain assembly intermediates in a process that promotes incorporation of early nuclear-encoded subunits into these complexes. This is Mitochondrial import inner membrane translocase subunit Tim21 (TIMM21) from Homo sapiens (Human).